The primary structure comprises 494 residues: Rhamnulokinase (494 aa).

18–22 provides a ligand contact to ATP; it reads ASSGR. Residues G87 and 242-244 each bind substrate; that span reads HDT. Catalysis depends on D243, which acts as the Proton acceptor. T265 provides a ligand contact to ATP. N302 contributes to the substrate binding site. Q310 is an ATP binding site. The cysteines at positions 360 and 377 are disulfide-linked. ATP is bound at residue G411.

It belongs to the rhamnulokinase family. Mg(2+) serves as cofactor.

The enzyme catalyses L-rhamnulose + ATP = L-rhamnulose 1-phosphate + ADP + H(+). The protein operates within carbohydrate degradation; L-rhamnose degradation; glycerone phosphate from L-rhamnose: step 2/3. Its function is as follows. Involved in the catabolism of L-rhamnose (6-deoxy-L-mannose). Catalyzes the transfer of the gamma-phosphate group from ATP to the 1-hydroxyl group of L-rhamnulose to yield L-rhamnulose 1-phosphate. The sequence is that of Rhamnulokinase from Enterococcus faecalis (strain ATCC 700802 / V583).